The sequence spans 518 residues: Cell wall biosynthesis protein LcpA (518 aa).

At 1–31 (MTEKYRPVRDIKPAPAAMQSTKQAGHPVFRS) the chain is on the cytoplasmic side. Residues 32–52 (VVAFVSVLVLLVSGLGYLAVG) form a helical membrane-spanning segment. Topologically, residues 53-518 (KVDGVASGNL…AGGDGPRCVN (466 aa)) are periplasmic. A disordered region spans residues 485 to 518 (AVTSSTVGQPGADVGEPIESPEFDAGGDGPRCVN).

It belongs to the LytR/CpsA/Psr (LCP) family. In terms of assembly, forms homodimers and homotetramers.

Its subcellular location is the cell inner membrane. Involved in cell wall biosynthesis. May be responsible for the transfer of arabinogalactan onto peptidoglycan. In vitro, has pyrophosphatase activity. The protein is Cell wall biosynthesis protein LcpA of Corynebacterium glutamicum (strain ATCC 13032 / DSM 20300 / JCM 1318 / BCRC 11384 / CCUG 27702 / LMG 3730 / NBRC 12168 / NCIMB 10025 / NRRL B-2784 / 534).